The chain runs to 172 residues: Transcriptional repressor NrdR (172 aa).

Residues 3 to 34 (CPFCSYSDNRVLESRLAEEGESVRRRRECKQC) fold into a zinc finger. Positions 49–139 (TVVIKRNGRR…VYRKFKGVAD (91 aa)) constitute an ATP-cone domain.

Belongs to the NrdR family. It depends on Zn(2+) as a cofactor.

Its function is as follows. Negatively regulates transcription of bacterial ribonucleotide reductase nrd genes and operons by binding to NrdR-boxes. This chain is Transcriptional repressor NrdR, found in Gloeobacter violaceus (strain ATCC 29082 / PCC 7421).